We begin with the raw amino-acid sequence, 76 residues long: Omega-conotoxin-like TxMKLT1-0211 (76 aa).

The N-terminal stretch at 1-22 is a signal peptide; that stretch reads MKLTCMMIVAVLFLTAWTFVTA. A propeptide spanning residues 23 to 52 is cleaved from the precursor; that stretch reads VPHSSNALENLYLKAHHEMNNPEDSELNKR. 3 cysteine pairs are disulfide-bonded: cysteine 53–cysteine 67, cysteine 60–cysteine 71, and cysteine 66–cysteine 75.

It belongs to the conotoxin O1 superfamily. As to expression, expressed by the venom duct.

Its subcellular location is the secreted. Omega-conotoxins act at presynaptic membranes, they bind and block voltage-gated calcium channels (Cav). This Conus textile (Cloth-of-gold cone) protein is Omega-conotoxin-like TxMKLT1-0211.